We begin with the raw amino-acid sequence, 166 residues long: MKIGIMSDTHDHLPNIRKAIEIFNDENVETVIHCGDFVSLFVIKEFENLNANIIATYGNNDGERCKLKEWLKDINEENIIDDFISVEIDDLKFFITHGHHQSVLEMAIKSGLYDVVIYGHTHERVFEEVDDVLVINPGECCGYLTGIPTIGILDTEKKEYREIVLE.

7 residues coordinate Mn(2+): aspartate 8, histidine 10, aspartate 36, asparagine 59, histidine 97, histidine 120, and histidine 122. Positions 8, 10, 36, 59, 97, 120, and 122 each coordinate Ni(2+).

It belongs to the metallophosphoesterase superfamily. YfcE family. In terms of assembly, monomer. It depends on Ni(2+) as a cofactor. Mn(2+) serves as cofactor.

With respect to regulation, competitively inhibited by phosphate. Its function is as follows. Shows phosphodiesterase activity. Hydrolyzes phosphodiesters bonds in the artificial chromogenic substrates bis-p-nitrophenyl phosphate (bis-pNPP), and less efficiently thymidine 5'-monophosphate p-nitrophenyl ester (pNP-TMP) and p-nitrophenylphosphorylcholine (pNPPC). No catalytic activity was found toward cAMP or cGMP, nucleotides or phospholipase substrates such as phosphatidylcholine. The physiological substrate is unknown. The protein is Phosphodiesterase MJ0936 of Methanocaldococcus jannaschii (strain ATCC 43067 / DSM 2661 / JAL-1 / JCM 10045 / NBRC 100440) (Methanococcus jannaschii).